The sequence spans 709 residues: Ral guanine nucleotide dissociation stimulator-like 3 (709 aa).

The interval 26–55 is disordered; that stretch reads VYSVSLRRQRSQRSTPERSGEGQTPIPATD. The N-terminal Ras-GEF domain maps to 64-201; the sequence is KVRALRAARL…LLEDFLKEAK (138 aa). Disordered regions lie at residues 203–225, 395–416, and 502–604; these read EQTE…TPGS, SQEE…KLPP, and PPAA…SRVP. In terms of domain architecture, Ras-GEF spans 248–503; that stretch reads SVDDVAEQLT…YRVSRVIEPP (256 aa). 2 stretches are compositionally biased toward low complexity: residues 502–511 and 533–551; these read PPAASCPSSP and SSPG…SVSP. Ser506 and Ser510 each carry phosphoserine. Residues 552-576 show a composition bias toward pro residues; sequence GSPPSSPRNREPPPPGSPPASPGPQ. A phosphoserine mark is found at Ser553, Ser568, Ser572, Ser577, and Ser600. Positions 611–706 are interaction with HRAS, MRAS and RIT1; it reads SEARVIRVSI…KEGTGHTLSA (96 aa). Positions 612-699 constitute a Ras-associating domain; the sequence is EARVIRVSIN…GDFLLRRKEG (88 aa).

Interacts with GTP-bound forms of RIT1, HRAS and MRAS. Widely expressed. Expressed at high levels in the liver and kidney.

Guanine nucleotide exchange factor (GEF) for Ral-A. Potential effector of GTPase HRas and Ras-related protein M-Ras. Negatively regulates Elk-1-dependent gene induction downstream of HRas and MEKK1. The polypeptide is Ral guanine nucleotide dissociation stimulator-like 3 (Rgl3) (Mus musculus (Mouse)).